A 652-amino-acid polypeptide reads, in one-letter code: ATP-dependent zinc metalloprotease FtsH (652 aa).

Residues 1–11 (MKKQNNGLIKN) lie on the Cytoplasmic side of the membrane. Residues 12-32 (PFLWLLFIFFLVTGFQYFYSG) form a helical membrane-spanning segment. Topologically, residues 33–131 (NNSGGSQQIN…EVTVKHESSS (99 aa)) are extracellular. A helical membrane pass occupies residues 132–152 (GIWINLLVSIVPFGILFFFLF). Topologically, residues 153–652 (SMMGNMGGGN…EVKSKMNDEK (500 aa)) are cytoplasmic. Residue 227–234 (GPPGTGKT) participates in ATP binding. His449 is a binding site for Zn(2+). Residue Glu450 is part of the active site. Positions 453 and 525 each coordinate Zn(2+). The interval 628 to 652 (MPEAVEEESHALSYDEVKSKMNDEK) is disordered. The span at 634-652 (EESHALSYDEVKSKMNDEK) shows a compositional bias: basic and acidic residues.

It in the central section; belongs to the AAA ATPase family. This sequence in the C-terminal section; belongs to the peptidase M41 family. Homohexamer. It depends on Zn(2+) as a cofactor.

It is found in the cell membrane. Functionally, acts as a processive, ATP-dependent zinc metallopeptidase for both cytoplasmic and membrane proteins. Plays a role in the quality control of integral membrane proteins. The sequence is that of ATP-dependent zinc metalloprotease FtsH from Streptococcus pneumoniae (strain ATCC BAA-255 / R6).